The primary structure comprises 418 residues: D-amino acid dehydrogenase (418 aa).

Val3–Trp17 is a binding site for FAD.

Belongs to the DadA oxidoreductase family. FAD serves as cofactor.

It carries out the reaction a D-alpha-amino acid + A + H2O = a 2-oxocarboxylate + AH2 + NH4(+). It functions in the pathway amino-acid degradation; D-alanine degradation; NH(3) and pyruvate from D-alanine: step 1/1. Functionally, oxidative deamination of D-amino acids. The sequence is that of D-amino acid dehydrogenase from Dechloromonas aromatica (strain RCB).